Here is a 186-residue protein sequence, read N- to C-terminus: Calcium-binding protein NCSA (186 aa).

4 EF-hand domains span residues 40 to 58 (SGTI…MGVG), 66 to 93 (LFNV…ITRG), 94 to 129 (TPEE…MYKL), and 142 to 177 (DPHD…NPDI). Ca(2+)-binding residues include Asp-107, Asp-109, Asn-111, Tyr-113, Glu-118, Asp-155, Asp-157, Asp-159, Tyr-161, and Glu-166.

This sequence belongs to the recoverin family.

Functionally, may prevent cells from entering development prematurely in the presence of environmental nutrients. The polypeptide is Calcium-binding protein NCSA (ncsA) (Dictyostelium discoideum (Social amoeba)).